The chain runs to 116 residues: Flagellar transcriptional regulator FlhD (116 aa).

This sequence belongs to the FlhD family. In terms of assembly, homodimer; disulfide-linked. Forms a heterohexamer composed of two FlhC and four FlhD subunits. Each FlhC binds a FlhD dimer, forming a heterotrimer, and a hexamer assembles by dimerization of two heterotrimers.

The protein localises to the cytoplasm. Functionally, functions in complex with FlhC as a master transcriptional regulator that regulates transcription of several flagellar and non-flagellar operons by binding to their promoter region. Activates expression of class 2 flagellar genes, including fliA, which is a flagellum-specific sigma factor that turns on the class 3 genes. Also regulates genes whose products function in a variety of physiological pathways. This is Flagellar transcriptional regulator FlhD from Escherichia coli O157:H7.